Reading from the N-terminus, the 125-residue chain is Large ribosomal subunit protein bL17 (125 aa).

It belongs to the bacterial ribosomal protein bL17 family. As to quaternary structure, part of the 50S ribosomal subunit. Contacts protein L32.

The polypeptide is Large ribosomal subunit protein bL17 (Acinetobacter baumannii (strain AB0057)).